Here is a 366-residue protein sequence, read N- to C-terminus: Erythronate-4-phosphate dehydrogenase (366 aa).

2 residues coordinate substrate: Ser46 and Thr67. The NAD(+) site is built by Asp147 and Thr175. Arg208 is a catalytic residue. Residue Asp228 coordinates NAD(+). Glu233 is a catalytic residue. Catalysis depends on His250, which acts as the Proton donor. Gly253 contributes to the NAD(+) binding site. Tyr254 is a substrate binding site.

It belongs to the D-isomer specific 2-hydroxyacid dehydrogenase family. PdxB subfamily. As to quaternary structure, homodimer.

The protein localises to the cytoplasm. It catalyses the reaction 4-phospho-D-erythronate + NAD(+) = (R)-3-hydroxy-2-oxo-4-phosphooxybutanoate + NADH + H(+). The protein operates within cofactor biosynthesis; pyridoxine 5'-phosphate biosynthesis; pyridoxine 5'-phosphate from D-erythrose 4-phosphate: step 2/5. Its function is as follows. Catalyzes the oxidation of erythronate-4-phosphate to 3-hydroxy-2-oxo-4-phosphonooxybutanoate. The protein is Erythronate-4-phosphate dehydrogenase of Coxiella burnetii (strain RSA 331 / Henzerling II).